A 426-amino-acid polypeptide reads, in one-letter code: Glutamate-1-semialdehyde 2,1-aminomutase (426 aa).

Lysine 265 carries the N6-(pyridoxal phosphate)lysine modification.

It belongs to the class-III pyridoxal-phosphate-dependent aminotransferase family. HemL subfamily. In terms of assembly, homodimer. The cofactor is pyridoxal 5'-phosphate.

It is found in the cytoplasm. It catalyses the reaction (S)-4-amino-5-oxopentanoate = 5-aminolevulinate. It functions in the pathway porphyrin-containing compound metabolism; protoporphyrin-IX biosynthesis; 5-aminolevulinate from L-glutamyl-tRNA(Glu): step 2/2. This Actinobacillus pleuropneumoniae serotype 7 (strain AP76) protein is Glutamate-1-semialdehyde 2,1-aminomutase.